A 116-amino-acid polypeptide reads, in one-letter code: Aspartate 1-decarboxylase (116 aa).

Serine 25 functions as the Schiff-base intermediate with substrate; via pyruvic acid in the catalytic mechanism. Pyruvic acid (Ser) is present on serine 25. Threonine 57 provides a ligand contact to substrate. Tyrosine 58 acts as the Proton donor in catalysis. 73-75 (GAA) serves as a coordination point for substrate.

This sequence belongs to the PanD family. As to quaternary structure, heterooctamer of four alpha and four beta subunits. Requires pyruvate as cofactor. Post-translationally, is synthesized initially as an inactive proenzyme, which is activated by self-cleavage at a specific serine bond to produce a beta-subunit with a hydroxyl group at its C-terminus and an alpha-subunit with a pyruvoyl group at its N-terminus.

It is found in the cytoplasm. It catalyses the reaction L-aspartate + H(+) = beta-alanine + CO2. It functions in the pathway cofactor biosynthesis; (R)-pantothenate biosynthesis; beta-alanine from L-aspartate: step 1/1. Functionally, catalyzes the pyruvoyl-dependent decarboxylation of aspartate to produce beta-alanine. In Fervidobacterium nodosum (strain ATCC 35602 / DSM 5306 / Rt17-B1), this protein is Aspartate 1-decarboxylase.